We begin with the raw amino-acid sequence, 367 residues long: Probable cysteine protease RD19D (367 aa).

Residues 1 to 22 (MVAKALAQLITCIILFCHVVAS) form the signal peptide. The propeptide at 23–136 (VEDLTIRQVT…AEAPMVEVDG (114 aa)) is activation peptide. N-linked (GlcNAc...) asparagine glycosylation occurs at N61. 2 disulfide bridges follow: C158-C208 and C192-C241. The active site involves C161. N-linked (GlcNAc...) asparagine glycosylation is present at N254. C297 and C352 are oxidised to a cystine. Catalysis depends on residues H304 and N331.

The protein belongs to the peptidase C1 family.

Probable thiol protease. The sequence is that of Probable cysteine protease RD19D from Arabidopsis thaliana (Mouse-ear cress).